Reading from the N-terminus, the 365-residue chain is 3-dehydroquinate synthase (365 aa).

NAD(+) contacts are provided by residues 69–74 (DGEAHK), 103–107 (GVIGD), 127–128 (TT), K140, K149, and 167–170 (TLNT). Positions 182, 245, and 262 each coordinate Zn(2+).

It belongs to the sugar phosphate cyclases superfamily. Dehydroquinate synthase family. Co(2+) is required as a cofactor. Zn(2+) serves as cofactor. The cofactor is NAD(+).

It is found in the cytoplasm. The enzyme catalyses 7-phospho-2-dehydro-3-deoxy-D-arabino-heptonate = 3-dehydroquinate + phosphate. The protein operates within metabolic intermediate biosynthesis; chorismate biosynthesis; chorismate from D-erythrose 4-phosphate and phosphoenolpyruvate: step 2/7. Its function is as follows. Catalyzes the conversion of 3-deoxy-D-arabino-heptulosonate 7-phosphate (DAHP) to dehydroquinate (DHQ). The sequence is that of 3-dehydroquinate synthase from Pseudomonas putida (strain W619).